We begin with the raw amino-acid sequence, 277 residues long: Endochitinase CHI (277 aa).

The first 31 residues, 1 to 31, serve as a signal peptide directing secretion; sequence MAKPTSRNDRFALFFITLIFLILTVSKPVAS. The region spanning 32–66 is the Chitin-binding type-1 domain; it reads QNCGCASDFCCSKYGYCGTTDEFCGEGCQAGPCRS. Intrachain disulfides connect Cys34/Cys42, Cys36/Cys48, Cys41/Cys55, and Cys59/Cys64. Positions 75–277 are catalytic; sequence VSLEGTVTPD…GVAPGDNLTC (203 aa). Catalysis depends on Glu136, which acts as the Proton donor. An N-linked (GlcNAc...) asparagine glycan is attached at Asn274.

The protein belongs to the glycosyl hydrolase 19 family. Chitinase class I subfamily.

The enzyme catalyses Random endo-hydrolysis of N-acetyl-beta-D-glucosaminide (1-&gt;4)-beta-linkages in chitin and chitodextrins.. The sequence is that of Endochitinase CHI from Arabidopsis thaliana (Mouse-ear cress).